The sequence spans 2175 residues: Non-reducing polyketide synthase PKS1 (2175 aa).

Residues 5 to 242 form an N-terminal acylcarrier protein transacylase domain (SAT) region; the sequence is LLFGDQTAEQ…VSIPIYGPYH (238 aa). One can recognise a Ketosynthase family 3 (KS3) domain in the interval 369-801; it reads TDKIAIVGMA…GGNTALLIED (433 aa). Residues Cys-541, His-676, and His-719 each act as for beta-ketoacyl synthase activity in the active site. The interval 900–1212 is malonyl-CoA:ACP transacylase (MAT) domain; that stretch reads FCFTGQGSQY…ISTSICHLFT (313 aa). Residue Ser-988 is the For acyl/malonyl transferase activity of the active site. Residues 1285 to 1604 are product template (PT) domain; the sequence is STSCQNVISE…RKVLNVFLPP (320 aa). The segment at 1289 to 1424 is N-terminal hotdog fold; it reads QNVISEEFDG…CTIRYEDKAV (136 aa). Residues 1289-1599 form the PKS/mFAS DH domain; it reads QNVISEEFDG…FQQIPRKVLN (311 aa). His-1321 functions as the Proton acceptor; for dehydratase activity in the catalytic mechanism. A C-terminal hotdog fold region spans residues 1452–1599; it reads AHKVQRGMAY…FQQIPRKVLN (148 aa). The Proton donor; for dehydratase activity role is filled by Asp-1512. The tract at residues 1640-1664 is disordered; the sequence is PVRKSAGPAKAAAAPSMPKPSKVAA. Positions 1643–1664 are enriched in low complexity; sequence KSAGPAKAAAAPSMPKPSKVAA. Residues 1666–1743 enclose the Carrier 1 domain; sequence KPAGSMVDKV…EMKKYFSQFN (78 aa). Ser-1703 carries the O-(pantetheine 4'-phosphoryl)serine modification. Residues 1766–1804 are disordered; sequence ATPFDEMSTPASSAPSVPQSDAGKPSPDSPTGDSLSDDV. Over residues 1774-1784 the composition is skewed to polar residues; that stretch reads TPASSAPSVPQ. The Carrier 2 domain occupies 1801 to 1878; the sequence is SDDVGDVSIA…DIENALGMRP (78 aa). Ser-1838 is modified (O-(pantetheine 4'-phosphoryl)serine). The segment at 1879 to 1899 is disordered; it reads KPKAVGPKLSKPSTKTDMNEV. Residues 1889–1899 are compositionally biased toward polar residues; the sequence is KPSTKTDMNEV. The interval 1932 to 2158 is claisen cyclase domain; it reads KVFFLPDGSG…GHHFSMMKDP (227 aa). Ser-2002 acts as the For Claisen cyclase activity in catalysis.

Pantetheine 4'-phosphate is required as a cofactor.

It carries out the reaction 6 malonyl-CoA + acetyl-CoA + 6 H(+) = naphtopyrone YWA1 + 6 CO2 + 7 CoA + H2O. It participates in pigment biosynthesis; melanin biosynthesis. Functionally, non-reducing polyketide synthase; part of the gene cluster 29 that mediates the biosynthesis of mediates the biosynthesis of dihydroxynaphthalene (DHN)-melanin, a bluish-green pigment and a structural component of the conidial wall. The first step of the pathway is the production of the heptaketide naphtopyrone YWA1 by the polyketide synthase PKS1 though condensation of acetyl-CoA with malonyl-CoA. The protein is Non-reducing polyketide synthase PKS1 of Zymoseptoria tritici (strain CBS 115943 / IPO323) (Speckled leaf blotch fungus).